A 422-amino-acid chain; its full sequence is ATP-dependent RNA helicase RhlB (422 aa).

The Q motif motif lies at 9-37 (QKFSDFALHPLVIKAIENQGFYHCTPIQA). Positions 40 to 219 (FPITLAGRDV…FEQMNHPEYI (180 aa)) constitute a Helicase ATP-binding domain. 53–60 (AQTGTGKT) is an ATP binding site. The DEAD box signature appears at 165 to 168 (DEAD). One can recognise a Helicase C-terminal domain in the interval 245–390 (RLLQTLIEEE…TSEYNKEALL (146 aa)). Residues 394-422 (PQPKRLQRHHRHYAGSRNQGASRKPRSPQ) form a disordered region. Basic residues predominate over residues 398-407 (RLQRHHRHYA).

This sequence belongs to the DEAD box helicase family. RhlB subfamily. As to quaternary structure, component of the RNA degradosome, which is a multiprotein complex involved in RNA processing and mRNA degradation.

The protein resides in the cytoplasm. The enzyme catalyses ATP + H2O = ADP + phosphate + H(+). Functionally, DEAD-box RNA helicase involved in RNA degradation. Has RNA-dependent ATPase activity and unwinds double-stranded RNA. The chain is ATP-dependent RNA helicase RhlB from Hamiltonella defensa subsp. Acyrthosiphon pisum (strain 5AT).